The chain runs to 625 residues: tRNA uridine 5-carboxymethylaminomethyl modification enzyme MnmG (625 aa).

FAD-binding positions include 10–15 (GGGHAG), Val-122, and Ser-177. 271–285 (GPRYCPSIEDKVNRF) is an NAD(+) binding site. Gln-368 is a binding site for FAD.

Belongs to the MnmG family. As to quaternary structure, homodimer. Heterotetramer of two MnmE and two MnmG subunits. It depends on FAD as a cofactor.

It is found in the cytoplasm. In terms of biological role, NAD-binding protein involved in the addition of a carboxymethylaminomethyl (cmnm) group at the wobble position (U34) of certain tRNAs, forming tRNA-cmnm(5)s(2)U34. The chain is tRNA uridine 5-carboxymethylaminomethyl modification enzyme MnmG from Wolinella succinogenes (strain ATCC 29543 / DSM 1740 / CCUG 13145 / JCM 31913 / LMG 7466 / NCTC 11488 / FDC 602W) (Vibrio succinogenes).